A 1158-amino-acid polypeptide reads, in one-letter code: ATP-dependent helicase/deoxyribonuclease subunit B (1158 aa).

ATP is bound at residue 8 to 15 (GRAGTGKS). Residues Cys-791, Cys-1112, Cys-1115, and Cys-1121 each contribute to the [4Fe-4S] cluster site.

This sequence belongs to the helicase family. AddB/RexB type 1 subfamily. Heterodimer of AddA and AddB. It depends on Mg(2+) as a cofactor. [4Fe-4S] cluster is required as a cofactor.

In terms of biological role, the heterodimer acts as both an ATP-dependent DNA helicase and an ATP-dependent, dual-direction single-stranded exonuclease. Recognizes the chi site generating a DNA molecule suitable for the initiation of homologous recombination. The AddB subunit has 5' -&gt; 3' nuclease activity but not helicase activity. The chain is ATP-dependent helicase/deoxyribonuclease subunit B from Clostridium perfringens (strain 13 / Type A).